Consider the following 92-residue polypeptide: PqqA binding protein (92 aa).

The protein belongs to the PqqD family. In terms of assembly, monomer. Interacts with PqqE.

The protein operates within cofactor biosynthesis; pyrroloquinoline quinone biosynthesis. Functions as a PqqA binding protein and presents PqqA to PqqE, in the pyrroloquinoline quinone (PQQ) biosynthetic pathway. The sequence is that of PqqA binding protein from Klebsiella pneumoniae (strain 342).